Here is a 140-residue protein sequence, read N- to C-terminus: 3-hydroxyacyl-[acyl-carrier-protein] dehydratase FabZ (140 aa).

The active site involves His48.

This sequence belongs to the thioester dehydratase family. FabZ subfamily.

The protein localises to the cytoplasm. The catalysed reaction is a (3R)-hydroxyacyl-[ACP] = a (2E)-enoyl-[ACP] + H2O. Its function is as follows. Involved in unsaturated fatty acids biosynthesis. Catalyzes the dehydration of short chain beta-hydroxyacyl-ACPs and long chain saturated and unsaturated beta-hydroxyacyl-ACPs. The chain is 3-hydroxyacyl-[acyl-carrier-protein] dehydratase FabZ from Halalkalibacterium halodurans (strain ATCC BAA-125 / DSM 18197 / FERM 7344 / JCM 9153 / C-125) (Bacillus halodurans).